A 158-amino-acid chain; its full sequence is Regulator of sigma D (158 aa).

It belongs to the Rsd/AlgQ family. As to quaternary structure, interacts with RpoD.

Its subcellular location is the cytoplasm. Binds RpoD and negatively regulates RpoD-mediated transcription activation by preventing the interaction between the primary sigma factor RpoD with the catalytic core of the RNA polymerase and with promoter DNA. May be involved in replacement of the RNA polymerase sigma subunit from RpoD to RpoS during the transition from exponential growth to the stationary phase. This chain is Regulator of sigma D, found in Escherichia coli O127:H6 (strain E2348/69 / EPEC).